Here is a 249-residue protein sequence, read N- to C-terminus: Proteasome subunit alpha type-7-B (249 aa).

The protein belongs to the peptidase T1A family. As to quaternary structure, the 26S proteasome consists of a 20S proteasome core and two 19S regulatory subunits. The 20S proteasome core is composed of 28 subunits that are arranged in four stacked rings, resulting in a barrel-shaped structure. The two end rings are each formed by seven alpha subunits, and the two central rings are each formed by seven beta subunits. The catalytic chamber with the active sites is on the inside of the barrel.

It is found in the cytoplasm. It localises to the nucleus. Its function is as follows. The proteasome is a multicatalytic proteinase complex which is characterized by its ability to cleave peptides with Arg, Phe, Tyr, Leu, and Glu adjacent to the leaving group at neutral or slightly basic pH. The proteasome has an ATP-dependent proteolytic activity. The polypeptide is Proteasome subunit alpha type-7-B (PAD1) (Oryza sativa subsp. indica (Rice)).